A 466-amino-acid chain; its full sequence is Methylenetetrahydrofolate--tRNA-(uracil-5-)-methyltransferase TrmFO (466 aa).

16-21 (GGGMAG) contributes to the FAD binding site.

This sequence belongs to the MnmG family. TrmFO subfamily. FAD serves as cofactor.

It localises to the cytoplasm. The catalysed reaction is uridine(54) in tRNA + (6R)-5,10-methylene-5,6,7,8-tetrahydrofolate + NADH + H(+) = 5-methyluridine(54) in tRNA + (6S)-5,6,7,8-tetrahydrofolate + NAD(+). It carries out the reaction uridine(54) in tRNA + (6R)-5,10-methylene-5,6,7,8-tetrahydrofolate + NADPH + H(+) = 5-methyluridine(54) in tRNA + (6S)-5,6,7,8-tetrahydrofolate + NADP(+). Its function is as follows. Catalyzes the folate-dependent formation of 5-methyl-uridine at position 54 (M-5-U54) in all tRNAs. The sequence is that of Methylenetetrahydrofolate--tRNA-(uracil-5-)-methyltransferase TrmFO from Maricaulis maris (strain MCS10) (Caulobacter maris).